We begin with the raw amino-acid sequence, 430 residues long: Histidine--tRNA ligase (430 aa).

The protein belongs to the class-II aminoacyl-tRNA synthetase family. In terms of assembly, homodimer.

Its subcellular location is the cytoplasm. It carries out the reaction tRNA(His) + L-histidine + ATP = L-histidyl-tRNA(His) + AMP + diphosphate + H(+). This chain is Histidine--tRNA ligase, found in Lactococcus lactis subsp. cremoris (strain MG1363).